The chain runs to 548 residues: Terpene synthase 1 (548 aa).

4 residues coordinate Mg(2+): Asp-301, Asp-305, Asp-445, and Glu-453. Residues 301 to 305 (DDTYD) carry the DDXXD motif motif.

It belongs to the terpene synthase family. Tpsa subfamily. Mg(2+) serves as cofactor. The cofactor is Mn(2+).

The catalysed reaction is (2E,6E)-farnesyl diphosphate = (+)-valencene + diphosphate. It functions in the pathway secondary metabolite biosynthesis; terpenoid biosynthesis. Its function is as follows. Sesquiterpene synthase involved in the biosynthesis of volatile compounds which contribute to fruit flavor and aroma. Mediates the conversion of (2E,6E)-farnesyl diphosphate (FPP) into (+)-valencene. No activity detected with geranyl diphosphate (GPP). This is Terpene synthase 1 from Citrus sinensis (Sweet orange).